The chain runs to 156 residues: 6,7-dimethyl-8-ribityllumazine synthase (156 aa).

5-amino-6-(D-ribitylamino)uracil-binding positions include Phe23, Ala57–Glu59, and Ala81–Ile83. A (2S)-2-hydroxy-3-oxobutyl phosphate-binding site is contributed by Ser86–Thr87. The Proton donor role is filled by His89. Phe114 provides a ligand contact to 5-amino-6-(D-ribitylamino)uracil. Arg128 lines the (2S)-2-hydroxy-3-oxobutyl phosphate pocket.

Belongs to the DMRL synthase family.

It catalyses the reaction (2S)-2-hydroxy-3-oxobutyl phosphate + 5-amino-6-(D-ribitylamino)uracil = 6,7-dimethyl-8-(1-D-ribityl)lumazine + phosphate + 2 H2O + H(+). The protein operates within cofactor biosynthesis; riboflavin biosynthesis; riboflavin from 2-hydroxy-3-oxobutyl phosphate and 5-amino-6-(D-ribitylamino)uracil: step 1/2. In terms of biological role, catalyzes the formation of 6,7-dimethyl-8-ribityllumazine by condensation of 5-amino-6-(D-ribitylamino)uracil with 3,4-dihydroxy-2-butanone 4-phosphate. This is the penultimate step in the biosynthesis of riboflavin. This is 6,7-dimethyl-8-ribityllumazine synthase from Brachyspira hyodysenteriae (strain ATCC 49526 / WA1).